We begin with the raw amino-acid sequence, 95 residues long: uncharacterized protein (95 aa).

Residues 27 to 47 form a helical membrane-spanning segment; it reads SFGLAIIGILLIACEIILFLT.

It localises to the membrane. This is an uncharacterized protein from Homo sapiens (Human).